Consider the following 157-residue polypeptide: SsrA-binding protein (157 aa).

It belongs to the SmpB family.

The protein resides in the cytoplasm. Its function is as follows. Required for rescue of stalled ribosomes mediated by trans-translation. Binds to transfer-messenger RNA (tmRNA), required for stable association of tmRNA with ribosomes. tmRNA and SmpB together mimic tRNA shape, replacing the anticodon stem-loop with SmpB. tmRNA is encoded by the ssrA gene; the 2 termini fold to resemble tRNA(Ala) and it encodes a 'tag peptide', a short internal open reading frame. During trans-translation Ala-aminoacylated tmRNA acts like a tRNA, entering the A-site of stalled ribosomes, displacing the stalled mRNA. The ribosome then switches to translate the ORF on the tmRNA; the nascent peptide is terminated with the 'tag peptide' encoded by the tmRNA and targeted for degradation. The ribosome is freed to recommence translation, which seems to be the essential function of trans-translation. The polypeptide is SsrA-binding protein (Aquifex aeolicus (strain VF5)).